The chain runs to 266 residues: Undecaprenyl-diphosphatase (266 aa).

7 consecutive transmembrane segments (helical) span residues 41 to 61 (NLAF…VILW), 82 to 102 (YVIN…FFKD), 106 to 126 (AIFG…AALL), 140 to 160 (ISMK…LPGL), 180 to 200 (LAQF…LLDG), 213 to 233 (IPTL…CLAC), and 245 to 265 (LIYF…VSQL).

Belongs to the UppP family.

It is found in the cell inner membrane. The catalysed reaction is di-trans,octa-cis-undecaprenyl diphosphate + H2O = di-trans,octa-cis-undecaprenyl phosphate + phosphate + H(+). Catalyzes the dephosphorylation of undecaprenyl diphosphate (UPP). Confers resistance to bacitracin. The sequence is that of Undecaprenyl-diphosphatase from Bacteroides fragilis (strain YCH46).